The following is a 351-amino-acid chain: S-adenosylmethionine:tRNA ribosyltransferase-isomerase (351 aa).

Belongs to the QueA family. Monomer.

The protein resides in the cytoplasm. It carries out the reaction 7-aminomethyl-7-carbaguanosine(34) in tRNA + S-adenosyl-L-methionine = epoxyqueuosine(34) in tRNA + adenine + L-methionine + 2 H(+). It functions in the pathway tRNA modification; tRNA-queuosine biosynthesis. Its function is as follows. Transfers and isomerizes the ribose moiety from AdoMet to the 7-aminomethyl group of 7-deazaguanine (preQ1-tRNA) to give epoxyqueuosine (oQ-tRNA). In Hahella chejuensis (strain KCTC 2396), this protein is S-adenosylmethionine:tRNA ribosyltransferase-isomerase.